A 209-amino-acid chain; its full sequence is Large ribosomal subunit protein uL3 (209 aa).

The interval 118–151 is disordered; it reads GFQGAIKRHGQSRGPMSHGSRYHRRPGSMGPVAP.

It belongs to the universal ribosomal protein uL3 family. In terms of assembly, part of the 50S ribosomal subunit. Forms a cluster with proteins L14 and L19.

In terms of biological role, one of the primary rRNA binding proteins, it binds directly near the 3'-end of the 23S rRNA, where it nucleates assembly of the 50S subunit. This chain is Large ribosomal subunit protein uL3, found in Enterococcus faecalis (strain ATCC 700802 / V583).